A 413-amino-acid polypeptide reads, in one-letter code: Alpha-ketoglutarate-dependent xanthine dioxygenase xan1 (413 aa).

Residues 1-18 (MSATATTTVVEPPTTTLT) show a composition bias toward low complexity. The tract at residues 1-24 (MSATATTTVVEPPTTTLTGATEPP) is disordered. His183 and Asp185 together coordinate Fe cation. 2-oxoglutarate is bound by residues Thr228 and Trp362. His377 contacts Fe cation. Arg389 contributes to the 2-oxoglutarate binding site.

Belongs to the TfdA dioxygenase family. Fe(2+) serves as cofactor.

Its subcellular location is the cytoplasm. It is found in the cytosol. The enzyme catalyses xanthine + 2-oxoglutarate + O2 = urate + succinate + CO2. Its function is as follows. Alpha-ketoglutarate-dependent xanthine dioxygenase is a non-heme mononuclear Fe(2+) enzyme that decarboxylates alpha-ketoglutarate to succinate and CO(2) while hydroxylating xanthine to generate uric acid. Allows xanthine utilization as a nitrogen source. The polypeptide is Alpha-ketoglutarate-dependent xanthine dioxygenase xan1 (xan1) (Schizosaccharomyces pombe (strain 972 / ATCC 24843) (Fission yeast)).